A 74-amino-acid chain; its full sequence is RNA-binding protein Hfq (74 aa).

Residues 9 to 69 (DQYLNQLRKN…ISTFSPVKNV (61 aa)) enclose the Sm domain.

This sequence belongs to the Hfq family. As to quaternary structure, homohexamer.

Its function is as follows. RNA chaperone that binds small regulatory RNA (sRNAs) and mRNAs to facilitate mRNA translational regulation in response to envelope stress, environmental stress and changes in metabolite concentrations. Also binds with high specificity to tRNAs. This is RNA-binding protein Hfq from Oceanobacillus iheyensis (strain DSM 14371 / CIP 107618 / JCM 11309 / KCTC 3954 / HTE831).